An 892-amino-acid chain; its full sequence is Protein RRP6-like 3 (892 aa).

Residues 119–287 form the 3'-5' exonuclease domain; the sequence is YVWVETESQL…IADSLTTELK (169 aa). In terms of domain architecture, HRDC spans 350–436; it reads SLNAEELVRK…CSHLDDIYKM (87 aa). The interval 785 to 811 is disordered; that stretch reads VDDSGDGTSEGDGAKELNDTQCNGNTL.

The protein resides in the cytoplasm. Its subcellular location is the cytosol. The sequence is that of Protein RRP6-like 3 from Arabidopsis thaliana (Mouse-ear cress).